Here is a 179-residue protein sequence, read N- to C-terminus: uncharacterized protein (179 aa).

Low complexity predominate over residues 26–39 (AAKLAAATTPTHTA). The segment at 26 to 179 (AAKLAAATTP…RPRRNTLRHM (154 aa)) is disordered. The segment covering 150–165 (RQSVTQSTAARQTQPH) has biased composition (polar residues). Positions 167–179 (GRPRPRRNTLRHM) are enriched in basic residues.

This is an uncharacterized protein from Equus caballus (Horse).